The following is a 529-amino-acid chain: Bifunctional purine biosynthesis protein PurH (529 aa).

Residues 1–148 (MQQRRPVRRA…KNHKDVAIVV (148 aa)) enclose the MGS-like domain.

The protein belongs to the PurH family.

The enzyme catalyses (6R)-10-formyltetrahydrofolate + 5-amino-1-(5-phospho-beta-D-ribosyl)imidazole-4-carboxamide = 5-formamido-1-(5-phospho-D-ribosyl)imidazole-4-carboxamide + (6S)-5,6,7,8-tetrahydrofolate. The catalysed reaction is IMP + H2O = 5-formamido-1-(5-phospho-D-ribosyl)imidazole-4-carboxamide. The protein operates within purine metabolism; IMP biosynthesis via de novo pathway; 5-formamido-1-(5-phospho-D-ribosyl)imidazole-4-carboxamide from 5-amino-1-(5-phospho-D-ribosyl)imidazole-4-carboxamide (10-formyl THF route): step 1/1. It participates in purine metabolism; IMP biosynthesis via de novo pathway; IMP from 5-formamido-1-(5-phospho-D-ribosyl)imidazole-4-carboxamide: step 1/1. The polypeptide is Bifunctional purine biosynthesis protein PurH (Klebsiella pneumoniae subsp. pneumoniae (strain ATCC 700721 / MGH 78578)).